A 466-amino-acid chain; its full sequence is Asparagine--tRNA ligase (466 aa).

This sequence belongs to the class-II aminoacyl-tRNA synthetase family. In terms of assembly, homodimer.

It localises to the cytoplasm. The catalysed reaction is tRNA(Asn) + L-asparagine + ATP = L-asparaginyl-tRNA(Asn) + AMP + diphosphate + H(+). This Shewanella baltica (strain OS195) protein is Asparagine--tRNA ligase.